We begin with the raw amino-acid sequence, 316 residues long: Ribosomal RNA small subunit methyltransferase H (316 aa).

S-adenosyl-L-methionine-binding positions include Ala32–His34, Asp52, Phe79, Asp106, and Gln113.

It belongs to the methyltransferase superfamily. RsmH family.

Its subcellular location is the cytoplasm. It catalyses the reaction cytidine(1402) in 16S rRNA + S-adenosyl-L-methionine = N(4)-methylcytidine(1402) in 16S rRNA + S-adenosyl-L-homocysteine + H(+). In terms of biological role, specifically methylates the N4 position of cytidine in position 1402 (C1402) of 16S rRNA. In Paenibacillus sp. (strain JDR-2), this protein is Ribosomal RNA small subunit methyltransferase H.